Here is a 409-residue protein sequence, read N- to C-terminus: Pyrophosphate--fructose 6-phosphate 1-phosphotransferase (409 aa).

Glycine 14 serves as a coordination point for diphosphate. Aspartate 123 is a Mg(2+) binding site. Substrate is bound by residues 151–153, 196–198, glutamate 268, and 325–328; these read TVD, MGR, and YFAR. Aspartate 153 functions as the Proton acceptor in the catalytic mechanism.

It belongs to the phosphofructokinase type A (PFKA) family. PPi-dependent PFK group II subfamily. Clade 'P' sub-subfamily. As to quaternary structure, homodimer. Requires Mg(2+) as cofactor.

The protein resides in the cytoplasm. The catalysed reaction is beta-D-fructose 6-phosphate + diphosphate = beta-D-fructose 1,6-bisphosphate + phosphate + H(+). It functions in the pathway carbohydrate degradation; glycolysis; D-glyceraldehyde 3-phosphate and glycerone phosphate from D-glucose: step 3/4. With respect to regulation, non-allosteric. Its function is as follows. Catalyzes the phosphorylation of D-fructose 6-phosphate, the first committing step of glycolysis. Uses inorganic phosphate (PPi) as phosphoryl donor instead of ATP like common ATP-dependent phosphofructokinases (ATP-PFKs), which renders the reaction reversible, and can thus function both in glycolysis and gluconeogenesis. Consistently, PPi-PFK can replace the enzymes of both the forward (ATP-PFK) and reverse (fructose-bisphosphatase (FBPase)) reactions. This chain is Pyrophosphate--fructose 6-phosphate 1-phosphotransferase, found in Methylomonas methanica.